The primary structure comprises 159 residues: 2-C-methyl-D-erythritol 2,4-cyclodiphosphate synthase (159 aa).

A divalent metal cation is bound by residues Asp8 and His10. Residues 8–10 (DVH) and 34–35 (HS) each bind 4-CDP-2-C-methyl-D-erythritol 2-phosphate. An a divalent metal cation-binding site is contributed by His42. Residues 56 to 58 (DIG), 61 to 65 (FPDTD), 100 to 106 (AQAPKML), 132 to 135 (TTTE), Phe139, and Arg142 each bind 4-CDP-2-C-methyl-D-erythritol 2-phosphate.

This sequence belongs to the IspF family. Homotrimer. A divalent metal cation is required as a cofactor.

The catalysed reaction is 4-CDP-2-C-methyl-D-erythritol 2-phosphate = 2-C-methyl-D-erythritol 2,4-cyclic diphosphate + CMP. The protein operates within isoprenoid biosynthesis; isopentenyl diphosphate biosynthesis via DXP pathway; isopentenyl diphosphate from 1-deoxy-D-xylulose 5-phosphate: step 4/6. In terms of biological role, involved in the biosynthesis of isopentenyl diphosphate (IPP) and dimethylallyl diphosphate (DMAPP), two major building blocks of isoprenoid compounds. Catalyzes the conversion of 4-diphosphocytidyl-2-C-methyl-D-erythritol 2-phosphate (CDP-ME2P) to 2-C-methyl-D-erythritol 2,4-cyclodiphosphate (ME-CPP) with a corresponding release of cytidine 5-monophosphate (CMP). The protein is 2-C-methyl-D-erythritol 2,4-cyclodiphosphate synthase of Salmonella typhi.